An 89-amino-acid polypeptide reads, in one-letter code: Small ribosomal subunit protein bS20 (89 aa).

The tract at residues 1–26 (MANIKASKKDALTSEKRRKKNSSRRS) is disordered. Basic residues predominate over residues 16–26 (KRRKKNSSRRS).

It belongs to the bacterial ribosomal protein bS20 family.

Functionally, binds directly to 16S ribosomal RNA. In Buchnera aphidicola subsp. Acyrthosiphon pisum (strain 5A), this protein is Small ribosomal subunit protein bS20.